Consider the following 336-residue polypeptide: Dihydroorotate dehydrogenase (quinone) (336 aa).

Residues 62–66 (AGLDK) and Thr-86 contribute to the FMN site. Lys-66 is a binding site for substrate. 111–115 (NRMGF) provides a ligand contact to substrate. The FMN site is built by Asn-139 and Asn-172. Asn-172 lines the substrate pocket. The active-site Nucleophile is the Ser-175. Asn-177 contributes to the substrate binding site. FMN contacts are provided by Lys-217 and Thr-245. 246-247 (NT) contributes to the substrate binding site. Residues Gly-268, Gly-297, and 318–319 (YS) contribute to the FMN site.

Belongs to the dihydroorotate dehydrogenase family. Type 2 subfamily. As to quaternary structure, monomer. FMN serves as cofactor.

Its subcellular location is the cell membrane. It carries out the reaction (S)-dihydroorotate + a quinone = orotate + a quinol. The protein operates within pyrimidine metabolism; UMP biosynthesis via de novo pathway; orotate from (S)-dihydroorotate (quinone route): step 1/1. Catalyzes the conversion of dihydroorotate to orotate with quinone as electron acceptor. In Salmonella agona (strain SL483), this protein is Dihydroorotate dehydrogenase (quinone).